The sequence spans 148 residues: Putative ankyrin repeat protein RF_1158 (148 aa).

An ANK repeat occupies 82–115 (RPTTALGIAIAQGNSEEVIKYLLANGADPKLAFD).

The protein is Putative ankyrin repeat protein RF_1158 of Rickettsia felis (strain ATCC VR-1525 / URRWXCal2) (Rickettsia azadi).